Reading from the N-terminus, the 219-residue chain is 2-phospho-L-lactate guanylyltransferase (219 aa).

This sequence belongs to the CofC family. As to quaternary structure, homodimer.

The enzyme catalyses (2S)-2-phospholactate + GTP + H(+) = (2S)-lactyl-2-diphospho-5'-guanosine + diphosphate. Its pathway is cofactor biosynthesis; coenzyme F420 biosynthesis. Its function is as follows. Guanylyltransferase that catalyzes the activation of (2S)-2-phospholactate (2-PL) as (2S)-lactyl-2-diphospho-5'-guanosine, via the condensation of 2-PL with GTP. It is involved in the biosynthesis of coenzyme F420, a hydride carrier cofactor. This chain is 2-phospho-L-lactate guanylyltransferase, found in Methanocaldococcus vulcanius (strain ATCC 700851 / DSM 12094 / M7) (Methanococcus vulcanius).